A 161-amino-acid polypeptide reads, in one-letter code: Allophycocyanin beta chain (161 aa).

An N4-methylasparagine modification is found at N71. C81 serves as a coordination point for (2R,3E)-phycocyanobilin.

The protein belongs to the phycobiliprotein family. As to quaternary structure, heterodimer of an alpha and a beta chain. Post-translationally, contains one covalently linked phycocyanobilin chromophore.

Its subcellular location is the plastid. The protein localises to the chloroplast thylakoid membrane. Light-harvesting photosynthetic bile pigment-protein from the phycobiliprotein complex. Allophycocyanin has a maximum absorption at approximately 650 nanometers. The polypeptide is Allophycocyanin beta chain (apcB) (Porphyra purpurea (Red seaweed)).